A 218-amino-acid polypeptide reads, in one-letter code: Small ribosomal subunit protein uS5 (218 aa).

The S5 DRBM domain occupies 55-118 (LDHEVIDVSI…RNAKLNIIPV (64 aa)).

It belongs to the universal ribosomal protein uS5 family. Part of the 30S ribosomal subunit. Contacts protein S4.

Functionally, with S4 and S12 plays an important role in translational accuracy. In Aeropyrum pernix (strain ATCC 700893 / DSM 11879 / JCM 9820 / NBRC 100138 / K1), this protein is Small ribosomal subunit protein uS5.